The primary structure comprises 786 residues: Receptor-like protein 30 (786 aa).

The signal sequence occupies residues 1 to 30 (MIPSQSNSFSGSVITLYFFLLGSLVLRTLA). The Extracellular portion of the chain corresponds to 31 to 739 (SSRLHYCRHD…SEPEEQVINW (709 aa)). Asn67, Asn98, Asn115, and Asn133 each carry an N-linked (GlcNAc...) asparagine glycan. 4 LRR repeats span residues 110 to 133 (LQQLQNLTLSDCHLYGEVTSSLGN), 134 to 158 (LSRLTHLDLSSNQLTGEVLASVSKL), 159 to 181 (NQLRDLLLSENSFSGNIPTSFTN), and 183 to 204 (TKLSSLDISSNQFTLENFSFIL). N-linked (GlcNAc...) asparagine glycans are attached at residues Asn181, Asn199, and Asn206. 14 LRR repeats span residues 207–231 (LTSLSSLNVASNHFKSTLPSDMSGL), 233–255 (NLKYFDVRENSFVGTFPTSLFTI), 257–279 (SLQIVYLEGNQFMGPIKFGNISS), 280–304 (SSRLWDLNLADNKFDGPIPEYISEI), 305–328 (HSLIVLDLSHNNLVGPIPTSISKL), 329–352 (VNLQHLSLSNNTLEGEVPGCLWGL), 354–375 (TVTLSHNSFNSFGKSSSGALDG), 376–399 (ESMQELDLGSNSLGGPFPHWICKQ), 400–423 (RFLKYLDLSNNLFNGSIPPCLKNS), 425–447 (YWLKGLVLRNNSFSGFLPDVFVN), 448–472 (ASMLLSLDVSYNRLEGKLPKSLINC), 474–496 (GMELLNVGSNIIKDTFPSWLVSL), 497–524 (PSLRVLILRSNAFYGSLYYDHISFGFQH), and 526–546 (RLIDISQNGFSGTLSPLYFSN). Residue Asn276 is glycosylated (N-linked (GlcNAc...) asparagine). An N-linked (GlcNAc...) asparagine glycan is attached at Asn338. N-linked (GlcNAc...) asparagine glycans are attached at residues Asn413, Asn422, Asn434, Asn447, and Asn471. Asn558 is a glycosylation site (N-linked (GlcNAc...) asparagine). LRR repeat units lie at residues 596–621 (IPYFFRAIDFSGNRFFGNIPESVGLL), 622–645 (KELRLLNLSGNSFTSNIPQSLANL), 646–669 (TNLETLDLSRNQLSGHIPRDLGSL), and 671–694 (FLSTMNFSHNLLEGPVPLGTQFQS). N-linked (GlcNAc...) asparagine glycosylation is found at Asn628 and Asn644. N-linked (GlcNAc...) asparagine glycosylation is present at Asn676. The helical transmembrane segment at 740-760 (IAAAIAYGPGVFCGLVIGHIF) threads the bilayer. Topologically, residues 761–786 (FTAHKHEWFMEKFHRNKRRVVTTSAR) are cytoplasmic.

The protein belongs to the RLP family.

Its subcellular location is the cell membrane. In terms of biological role, receptor for microbe-associated molecular patterns (MAMPs) that induces a BAK1-dependent basal immune response to necrotrophic fungi (e.g. S.sclerotiorum) in the presence of MAMPs (e.g. flg22 and SCLEROTINIA CULTURE FILTRATE ELICITOR1 (SCFE1) from the necrotrophic fungal pathogen S.sclerotiorum). Functionality seems to depend on the presence of the receptor kinase SOBIR1 as an adapter protein. Required for full non-host resistance to bacterial pathogens (e.g. P.syringae pv phaseolicola). The polypeptide is Receptor-like protein 30 (Arabidopsis thaliana (Mouse-ear cress)).